The chain runs to 317 residues: Olfactory receptor 2F2 (317 aa).

Residues 1-25 (MEIDNQTWVREFILLGLSSDWCTQI) lie on the Extracellular side of the membrane. Asn5 carries an N-linked (GlcNAc...) asparagine glycan. Residues 26–49 (SLFSLFLVTYLMTVLGNCLIVLLI) form a helical membrane-spanning segment. At 50–57 (RLDSRLHT) the chain is on the cytoplasmic side. The chain crosses the membrane as a helical span at residues 58-79 (PMYFFLTNLSLVDVSYATSVVP). Residues 80-100 (QLLAHFLAEHKAIPFQSCAAQ) lie on the Extracellular side of the membrane. A disulfide bridge connects residues Cys97 and Cys189. Residues 101–120 (LFFSLALGGIEFVLLAVMAY) form a helical membrane-spanning segment. Residues 121 to 139 (DRHVAVSDRLRYSAIMHGG) lie on the Cytoplasmic side of the membrane. A helical membrane pass occupies residues 140–158 (LCARLAITSWVSGSINSLV). The Extracellular segment spans residues 159–195 (QTAITFQLPMCTNKFIDHISCELLAVVRLACVDTSSN). The helical transmembrane segment at 196–219 (EAAIMVSSIVLLMTPFCLVLLSYI) threads the bilayer. At 220–236 (RIISTILKIQSREGRKK) the chain is on the cytoplasmic side. The helical transmembrane segment at 237-259 (AFHTCASHLTVVALCYGTTIFTY) threads the bilayer. Residues 260–272 (IQPHSGPSVLQEK) lie on the Extracellular side of the membrane. The chain crosses the membrane as a helical span at residues 273-292 (LISVFYAIVMPLLNPVIYSL). Topologically, residues 293–317 (RNKEVKGAWHKLLEKFSGLTSKLGT) are cytoplasmic.

This sequence belongs to the G-protein coupled receptor 1 family.

Its subcellular location is the cell membrane. Its function is as follows. Odorant receptor. This chain is Olfactory receptor 2F2 (OR2F2), found in Homo sapiens (Human).